A 270-amino-acid chain; its full sequence is Peflin (270 aa).

The tract at residues 1-97 is disordered; it reads MSYQYGQGYS…YRQQGSAGNV (97 aa). 5 repeat units span residues 22 to 30, 44 to 54, 62 to 70, 72 to 81, and 83 to 91. Residues 22–91 are 5 X 9 AA approximate tandem repeat of [AP]-P-G-G-P-Y-G-G-P-P; the sequence is PPRAPYAGGP…QPQGGPYRQQ (70 aa). Composition is skewed to low complexity over residues 26 to 47 and 55 to 66; these read PYAG…PPGQ and YGSYGQPGPRAP. The segment covering 67-84 has biased composition (gly residues); it reads YGGGQAPGGPYGGYGQPQ. EF-hand domains are found at residues 100–135, 141–169, 170–202, 203–239, and 240–269; these read GVNP…FNNS, TCIM…WTFL, QQWR…MGYN, LSPQ…LQSM, and TQAF…ITRL. Positions 113, 115, 117, 119, and 124 each coordinate Ca(2+). Residues Asp180, Asp182, Ser184, Ser186, and Glu191 each contribute to the Ca(2+) site.

In terms of assembly, heterodimer; heterodimerizes (via the EF-hand 5) with pdcd6.

The protein localises to the cytoplasm. It is found in the endoplasmic reticulum. The protein resides in the membrane. It localises to the cytoplasmic vesicle. Its subcellular location is the COPII-coated vesicle membrane. Functionally, calcium-binding protein that acts as an adapter that bridges unrelated proteins or stabilizes weak protein-protein complexes in response to calcium. Acts as a negative regulator of ER-Golgi transport. This Danio rerio (Zebrafish) protein is Peflin.